The chain runs to 89 residues: Small ribosomal subunit protein uS15 (89 aa).

This sequence belongs to the universal ribosomal protein uS15 family. Part of the 30S ribosomal subunit. Forms a bridge to the 50S subunit in the 70S ribosome, contacting the 23S rRNA.

One of the primary rRNA binding proteins, it binds directly to 16S rRNA where it helps nucleate assembly of the platform of the 30S subunit by binding and bridging several RNA helices of the 16S rRNA. In terms of biological role, forms an intersubunit bridge (bridge B4) with the 23S rRNA of the 50S subunit in the ribosome. This chain is Small ribosomal subunit protein uS15, found in Shewanella baltica (strain OS223).